The chain runs to 75 residues: DNA-directed RNA polymerase subunit Rpo5 (75 aa).

This sequence belongs to the archaeal Rpo5/eukaryotic RPB5 RNA polymerase subunit family. As to quaternary structure, part of the RNA polymerase complex.

Its subcellular location is the cytoplasm. It carries out the reaction RNA(n) + a ribonucleoside 5'-triphosphate = RNA(n+1) + diphosphate. Its function is as follows. DNA-dependent RNA polymerase (RNAP) catalyzes the transcription of DNA into RNA using the four ribonucleoside triphosphates as substrates. This chain is DNA-directed RNA polymerase subunit Rpo5, found in Pyrobaculum aerophilum (strain ATCC 51768 / DSM 7523 / JCM 9630 / CIP 104966 / NBRC 100827 / IM2).